A 376-amino-acid polypeptide reads, in one-letter code: Serpin B6 (376 aa).

Methionine 1 carries the post-translational modification N-acetylmethionine. Serine 151 is subject to Phosphoserine. Lysine 195 carries the N6-acetyllysine modification.

Belongs to the serpin family. Ov-serpin subfamily. As to quaternary structure, forms a complex with the monomeric form of beta-tryptase.

The protein localises to the cytoplasm. Functionally, inhibitor of cathepsin G, kallikrein-8 and thrombin. May play an important role in the inner ear in the protection against leakage of lysosomal content during stress. May be involved in the regulation of serine proteinases present in the brain or extravasated from the blood. The polypeptide is Serpin B6 (SERPINB6) (Pongo abelii (Sumatran orangutan)).